We begin with the raw amino-acid sequence, 121 residues long: Large ribosomal subunit protein bL19 (121 aa).

This sequence belongs to the bacterial ribosomal protein bL19 family.

In terms of biological role, this protein is located at the 30S-50S ribosomal subunit interface and may play a role in the structure and function of the aminoacyl-tRNA binding site. The protein is Large ribosomal subunit protein bL19 of Neisseria gonorrhoeae (strain ATCC 700825 / FA 1090).